A 1379-amino-acid chain; its full sequence is DNA-directed RNA polymerase subunit beta (1379 aa).

Belongs to the RNA polymerase beta chain family. The RNAP catalytic core consists of 2 alpha, 1 beta, 1 beta' and 1 omega subunit. When a sigma factor is associated with the core the holoenzyme is formed, which can initiate transcription.

The enzyme catalyses RNA(n) + a ribonucleoside 5'-triphosphate = RNA(n+1) + diphosphate. In terms of biological role, DNA-dependent RNA polymerase catalyzes the transcription of DNA into RNA using the four ribonucleoside triphosphates as substrates. This Allorhizobium ampelinum (strain ATCC BAA-846 / DSM 112012 / S4) (Agrobacterium vitis (strain S4)) protein is DNA-directed RNA polymerase subunit beta.